Reading from the N-terminus, the 413-residue chain is Isobutyryl-CoA dehydrogenase, mitochondrial (413 aa).

Residues 1 to 20 (MAMLRSGYRRFGCLRAALKS) constitute a mitochondrion transit peptide. At K48 the chain carries N6-acetyllysine; alternate. K48 bears the N6-succinyllysine; alternate mark. Residues 156–165 (YCLTEPGSGS) and 189–191 (FIS) each bind FAD. S165 contributes to the substrate binding site. K211 bears the N6-succinyllysine mark. The residue at position 229 (K229) is an N6-acetyllysine. Position 269 is an N6-succinyllysine (K269). 272–275 (NGGR) provides a ligand contact to substrate. FAD is bound by residues R300, 310–311 (SQ), and 369–373 (QMHGG). Residue E396 is the Proton acceptor of the active site. An FAD-binding site is contributed by 398 to 400 (SNE). R408 provides a ligand contact to substrate.

This sequence belongs to the acyl-CoA dehydrogenase family. Homotetramer, formed by a dimer of dimers. FAD serves as cofactor.

Its subcellular location is the mitochondrion. The catalysed reaction is 2-methylpropanoyl-CoA + oxidized [electron-transfer flavoprotein] + H(+) = 2-methylpropenoyl-CoA + reduced [electron-transfer flavoprotein]. It carries out the reaction (2S)-2-methylbutanoyl-CoA + oxidized [electron-transfer flavoprotein] + H(+) = (2E)-2-methylbut-2-enoyl-CoA + reduced [electron-transfer flavoprotein]. It catalyses the reaction propanoyl-CoA + oxidized [electron-transfer flavoprotein] + H(+) = acryloyl-CoA + reduced [electron-transfer flavoprotein]. It functions in the pathway amino-acid degradation; L-valine degradation. Its function is as follows. Isobutyryl-CoA dehydrogenase which catalyzes the conversion of 2-methylpropanoyl-CoA to (2E)-2-methylpropenoyl-CoA in the valine catabolic pathway. To a lesser extent, also able to catalyze the oxidation of (2S)-2-methylbutanoyl-CoA. This is Isobutyryl-CoA dehydrogenase, mitochondrial from Mus musculus (Mouse).